The primary structure comprises 129 residues: Large ribosomal subunit protein uL22 (129 aa).

The protein belongs to the universal ribosomal protein uL22 family. As to quaternary structure, part of the 50S ribosomal subunit.

In terms of biological role, this protein binds specifically to 23S rRNA; its binding is stimulated by other ribosomal proteins, e.g. L4, L17, and L20. It is important during the early stages of 50S assembly. It makes multiple contacts with different domains of the 23S rRNA in the assembled 50S subunit and ribosome. Its function is as follows. The globular domain of the protein is located near the polypeptide exit tunnel on the outside of the subunit, while an extended beta-hairpin is found that lines the wall of the exit tunnel in the center of the 70S ribosome. The protein is Large ribosomal subunit protein uL22 of Rhizobium etli (strain ATCC 51251 / DSM 11541 / JCM 21823 / NBRC 15573 / CFN 42).